The following is a 332-amino-acid chain: Nicotianamine synthase 1 (332 aa).

This sequence belongs to the nicotianamine synthase (NAS)-like family. As to expression, expressed in roots.

The enzyme catalyses 3 S-adenosyl-L-methionine = nicotianamine + 3 S-methyl-5'-thioadenosine + 3 H(+). Functionally, synthesizes nicotianamine, a polyamine that is the first intermediate in the synthesis of the phytosiderophores of the mugineic acid type found in gramineae which serve as a sensor for the physiological iron status within the plant, and/or might be involved in the transport of iron. The polypeptide is Nicotianamine synthase 1 (NAS1) (Oryza sativa subsp. indica (Rice)).